The primary structure comprises 478 residues: Sulfate adenylyltransferase subunit 1 (478 aa).

Residues 28-244 (KTMLRFLTCG…LESVDVVNAS (217 aa)) enclose the tr-type G domain. The segment at 37 to 44 (GSVDDGKS) is G1. Residue 37–44 (GSVDDGKS) participates in GTP binding. The tract at residues 95–99 (GITID) is G2. Residues 116–119 (DTPG) are G3. GTP-binding positions include 116–120 (DTPGH) and 171–174 (NKMD). The interval 171–174 (NKMD) is G4. The G5 stretch occupies residues 209 to 211 (SAL).

Belongs to the TRAFAC class translation factor GTPase superfamily. Classic translation factor GTPase family. CysN/NodQ subfamily. In terms of assembly, heterodimer composed of CysD, the smaller subunit, and CysN.

The enzyme catalyses sulfate + ATP + H(+) = adenosine 5'-phosphosulfate + diphosphate. It participates in sulfur metabolism; hydrogen sulfide biosynthesis; sulfite from sulfate: step 1/3. Functionally, with CysD forms the ATP sulfurylase (ATPS) that catalyzes the adenylation of sulfate producing adenosine 5'-phosphosulfate (APS) and diphosphate, the first enzymatic step in sulfur assimilation pathway. APS synthesis involves the formation of a high-energy phosphoric-sulfuric acid anhydride bond driven by GTP hydrolysis by CysN coupled to ATP hydrolysis by CysD. This chain is Sulfate adenylyltransferase subunit 1, found in Yersinia enterocolitica serotype O:8 / biotype 1B (strain NCTC 13174 / 8081).